A 147-amino-acid chain; its full sequence is Leghemoglobin (147 aa).

Residues Gly2–Ser147 form the Globin domain. Nitrated tyrosine occurs at positions 25 and 30. Ser45 is a binding site for heme b. At Ser45 the chain carries Phosphoserine. His62 is an O2 binding site. Lys65, His94, and Lys97 together coordinate heme b. Tyr135 is subject to Nitrated tyrosine.

The protein belongs to the plant globin family. In terms of assembly, monomer. Nitrated in effective nodules and particularly in hypoxic conditions; this mechanism may play a protective role in the symbiosis by buffering toxic peroxynitrite NO(2)(-). Nitration level decrease during nodule senescence. Post-translationally, phosphorylation at Ser-45 disrupts the molecular environment of its porphyrin ring oxygen binding pocket, thus leading to a reduced oxygen consumption and to the delivery of oxygen O(2) to symbiosomes. In terms of tissue distribution, root nodules.

The protein resides in the cytoplasm. It localises to the cytosol. The protein localises to the nucleus. In terms of biological role, leghemoglobin that reversibly binds oxygen O(2) through a pentacoordinated heme iron. In root nodules, facilitates the diffusion of oxygen to the bacteroids while preventing the bacterial nitrogenase from being inactivated by buffering dioxygen, nitric oxide and carbon monoxide, and promoting the formation of reactive oxygen species (ROS, e.g. H(2)O(2)). This role is essential for symbiotic nitrogen fixation (SNF). The sequence is that of Leghemoglobin (LB3) from Medicago sativa (Alfalfa).